We begin with the raw amino-acid sequence, 2117 residues long: Tudor domain-containing 6 (2117 aa).

Tudor domains are found at residues 62–118 (DGNP…FFYL), 291–350 (AENL…FFRM), 527–584 (KPVV…FQQL), 757–816 (EPLL…FLKM), and 974–1030 (PQTF…AGDI). Positions 1125 to 1216 (ASACKKESST…SSKPEVVKPK (92 aa)) are disordered. The span at 1127 to 1152 (ACKKESSTGPKRDAIDQVPKSRESHA) shows a compositional bias: basic and acidic residues. 2 stretches are compositionally biased toward polar residues: residues 1153 to 1174 (IQRSNDVASKQPQSRWGFSTNG) and 1181 to 1209 (DSGTINNCQKQPELRTSQGNLRHPCTSSK). 2 Tudor domains span residues 1282 to 1340 (DIHE…FASF) and 1485 to 1543 (CMPV…LSDV).

In terms of assembly, interacts (via Tudor domain) with buc (when dimethylated on arginine residues); and may be responsible for recruitment of different protein complexes to germ plasm.

It localises to the cytoplasm. Tudor domain-containing protein involved in germ cell development, more specifically the formation of chromatoid body (during spermiogenesis), Balbiani body (during oogenesis), germ plasm (upon fertilization), and for proper miRNA expression and spliceosome maturation. Required for Balbiani body and germ plasm formation and mobility through interaction with dimethylated arginines in the prion-like protein Bucky ball (buc). Coordinates transcript deposition into future primordial germ cells. Interacts with known germ plasm mRNAs such as vasa, dazl, nanos3 and hook2. The polypeptide is Tudor domain-containing 6 (Danio rerio (Zebrafish)).